We begin with the raw amino-acid sequence, 141 residues long: Nucleoside diphosphate kinase (141 aa).

The ATP site is built by lysine 11, phenylalanine 59, arginine 87, threonine 93, arginine 104, and asparagine 114. The active-site Pros-phosphohistidine intermediate is the histidine 117.

Belongs to the NDK family. As to quaternary structure, homotetramer. Mg(2+) is required as a cofactor.

The protein resides in the cytoplasm. It catalyses the reaction a 2'-deoxyribonucleoside 5'-diphosphate + ATP = a 2'-deoxyribonucleoside 5'-triphosphate + ADP. The catalysed reaction is a ribonucleoside 5'-diphosphate + ATP = a ribonucleoside 5'-triphosphate + ADP. Major role in the synthesis of nucleoside triphosphates other than ATP. The ATP gamma phosphate is transferred to the NDP beta phosphate via a ping-pong mechanism, using a phosphorylated active-site intermediate. This Herminiimonas arsenicoxydans protein is Nucleoside diphosphate kinase.